Reading from the N-terminus, the 243-residue chain is Ubiquinone/menaquinone biosynthesis C-methyltransferase UbiE (243 aa).

S-adenosyl-L-methionine-binding positions include Thr69, Asp90, and Asp116–Ala117.

Belongs to the class I-like SAM-binding methyltransferase superfamily. MenG/UbiE family.

The catalysed reaction is a 2-demethylmenaquinol + S-adenosyl-L-methionine = a menaquinol + S-adenosyl-L-homocysteine + H(+). It catalyses the reaction a 2-methoxy-6-(all-trans-polyprenyl)benzene-1,4-diol + S-adenosyl-L-methionine = a 5-methoxy-2-methyl-3-(all-trans-polyprenyl)benzene-1,4-diol + S-adenosyl-L-homocysteine + H(+). The protein operates within quinol/quinone metabolism; menaquinone biosynthesis; menaquinol from 1,4-dihydroxy-2-naphthoate: step 2/2. It functions in the pathway cofactor biosynthesis; ubiquinone biosynthesis. Functionally, methyltransferase required for the conversion of demethylmenaquinol (DMKH2) to menaquinol (MKH2) and the conversion of 2-polyprenyl-6-methoxy-1,4-benzoquinol (DDMQH2) to 2-polyprenyl-3-methyl-6-methoxy-1,4-benzoquinol (DMQH2). The sequence is that of Ubiquinone/menaquinone biosynthesis C-methyltransferase UbiE from Burkholderia cenocepacia (strain HI2424).